A 108-amino-acid polypeptide reads, in one-letter code: DNA-directed RNA polymerase III subunit RPC10 (108 aa).

Zn(2+) contacts are provided by Cys-5, Cys-8, Cys-25, Cys-28, Cys-69, and Cys-72. The C4-type zinc-finger motif lies at 5 to 28 (CPGCGNGLIVEEGQRCHRFACNTC). The TFIIS-type zinc finger occupies 65–107 (TAEPCPKCEHPRAYFMQLQTRYADEPMTTFYKCCNAQCGHRWR). The short motif at 88–89 (DE) is the Hairpin element. Residues Cys-98 and Cys-102 each coordinate Zn(2+).

Belongs to the archaeal RpoM/eukaryotic RPA12/RPB9/RPC11 RNA polymerase family. Component of the RNA polymerase III complex consisting of 17 subunits: a ten-subunit horseshoe-shaped catalytic core composed of POLR3A/RPC1, POLR3B/RPC2, POLR1C/RPAC1, POLR1D/RPAC2, POLR3K/RPC10, POLR2E/RPABC1, POLR2F/RPABC2, POLR2H/RPABC3, POLR2K/RPABC4 and POLR2L/RPABC5; a mobile stalk composed of two subunits POLR3H/RPC8 and CRCP/RPC9, protruding from the core and functioning primarily in transcription initiation; and additional subunits homologous to general transcription factors of the RNA polymerase II machinery, POLR3C/RPC3-POLR3F/RPC6-POLR3G/RPC7 heterotrimer required for transcription initiation and POLR3D/RPC4-POLR3E/RPC5 heterodimer involved in both transcription initiation and termination.

Its subcellular location is the nucleus. Its function is as follows. Core component of RNA polymerase III (Pol III) which synthesizes small non-coding RNAs using the four ribonucleoside triphosphates as substrates. Can mediate Pol I proofreading of the nascent RNA transcript. Anchors into the Pol III active site to constantly monitor transcription fidelity, cleaves mis-incorporated 5'-ribonucleotides and restarts the transcription process. Once Pol III reaches the poly(dT) termination signal, can induce Pol III clamp opening and transcription termination. Pol III plays an important role in sensing and limiting infection by intracellular bacteria and DNA viruses. Acts as a nuclear and cytosolic DNA sensor involved in innate immune response. Can sense non-self dsDNA that serves as template for transcription into dsRNA. The non-self RNA polymerase III transcripts, such as Epstein-Barr virus-encoded RNAs (EBERs) induce type I interferon and NF-kappa-B through the RIG-I pathway. The sequence is that of DNA-directed RNA polymerase III subunit RPC10 (POLR3K) from Bos taurus (Bovine).